Consider the following 714-residue polypeptide: A-kinase anchor protein 5 (714 aa).

2 disordered regions span residues 1-146 (METS…GYVR) and 243-333 (VLEN…VGHT). Residues 1–164 (METSVSEIQI…EIKAQIQPDE (164 aa)) form an essential to the intracellular anchoring function region. Residues serine 4 and serine 22 each carry the phosphoserine modification. The segment covering 10 to 32 (IETKDEKRPEAASPQKERQERKT) has biased composition (basic and acidic residues). Cysteine 36 is lipidated: S-palmitoyl cysteine. The span at 37-50 (FKRRKKVNKKKAKA) shows a compositional bias: basic residues. 2 stretches are compositionally biased toward basic and acidic residues: residues 54–63 (TAEETEKHAP) and 88–100 (KPSE…KPSE). The AKAP CaM-binding signature appears at 74-94 (AGAWASIKRLVTHRKPSESAE). Cysteine 123 carries S-palmitoyl cysteine lipidation. The segment covering 243–268 (VLENSAADSPQPVTSTAPLSPATTHQ) has biased composition (polar residues). Over residues 285–301 (GKDDGRRKTAAEEKKSG) the composition is skewed to basic and acidic residues. The stretch at 305-312 (LGQAEEAS) is one 1; approximate repeat. Residues 305–597 (LGQAEEASSV…PIVGQAEETV (293 aa)) are 28 X 8 AA repeats of V-G-Q-A-E-E-A-T. A compositionally biased stretch (polar residues) spans 310-323 (EASSVSQADKSVLS). The 2; approximate repeat unit spans residues 322–329 (LSQAEEAT). A 3; approximate repeat occupies 330-337 (VGHTEEAT). A 4; approximate repeat occupies 350-357 (LSQAEEAT). One copy of the 5; approximate repeat lies at 358 to 365 (VAQAKETV). A 6; approximate repeat occupies 366–373 (LSQAEEVK). A 7; approximate repeat occupies 398-405 (VSQAEEAI). An 8; approximate repeat occupies 414 to 421 (MGQAEEAT). Repeat copies occupy residues 430–437 (VGQAEEAT), 438–445 (VGQAEEAT), 446–453 (VGQAEEAT), 454–461 (VGQAEEAT), and 462–469 (VGQAEEAT). A 14; approximate repeat occupies 470 to 477 (VGQAGEAT). A 15; approximate repeat occupies 486–493 (VGQAEEAI). Tandem repeats lie at residues 494 to 501 (VGQAEEAT), 502 to 509 (VGQAEEAT), 510 to 517 (VGQAEEAT), and 518 to 525 (VGQAEEAT). Residues 526–533 (VDQAEEAT) form a 20; approximate repeat. Repeat 21 spans residues 534-541 (VGQAEEAT). The 22; approximate repeat unit spans residues 542-549 (VGQAGEAA). A 23; approximate repeat occupies 550-557 (VGQAEEAI). One copy of the 24; approximate repeat lies at 558-565 (VAQAEEAT). Copy 25 of the repeat occupies 566–573 (VGQAGEAT). One copy of the 26; approximate repeat lies at 574–581 (VGQAEKAT). The stretch at 582 to 589 (VGQAEEPI) is one 27; approximate repeat. One copy of the 28; approximate repeat lies at 590–597 (VGQAEETV). Residues 675-696 (YETLLIETASSLVKNAIELSVE) are RII-beta subunit binding domain. Residues 697–714 (QLVNEMVSEDNQINTLFQ) are tethers NFATC2 to CRAC channels.

As to quaternary structure, binding protein for dimer of the RII-beta regulatory subunit of cAMP-dependent protein kinase (PKA) and also for the protein kinase C (PKC) and the phosphatase calcineurin (PP2B). Each enzyme is inhibited when bound to the anchoring protein. Also binds the beta2-adrenergic receptor. Part of a complex containing AKAP5, ADCY5, ADCY6 and PDE4C. Interacts with ADCY8, and enhances its phosphorylation at lipid rafts. Interacts with ORAI1 (isoform alpha) (via N-terminus) upon store depletion and in response to LTC4. Does not interact with ORAI2 and ORAI3 paralogs. Interacts (via leucine zipper domain) with NFATC2/NFAT1. Interacts with calmodulin; the interaction is calcium-independent. Interacts with KCNQ2; the interaction may help KCNQ2 channel complex to retain calcium-bound calmodulin. Interacts with KCNK2; the channel is recruited to postsynaptic microdomains by AKAP5 where it can integrate neurotransmitter receptor signals. Part of a complex composed of AKAP5 and ADRB2. Palmitoylated. Palmitoylation at Cys-36 and Cys-123 plays a key role in the targeting of AKAP5 to lipid rafts. Palmitoylation by ZDHHC2 is required for AKAP5 function in LTP-stimulated recycling endosome exocytosis.

The protein resides in the postsynaptic recycling endosome membrane. The protein localises to the cell projection. It is found in the dendrite. Its subcellular location is the postsynaptic cell membrane. Its function is as follows. Multivalent scaffold protein that anchors the cAMP-dependent protein kinase/PKA to cytoskeletal and/or organelle-associated proteins, targeting the signal carried by cAMP to specific intracellular effectors. Association with the beta2-adrenergic receptor (beta2-AR) not only regulates beta2-AR signaling pathway, but also the activation by PKA by switching off the beta2-AR signaling cascade. Plays a role in long term synaptic potentiation by regulating protein trafficking from the dendritic recycling endosomes to the plasma membrane and controlling both structural and functional plasticity at excitatory synapses. In hippocampal pyramidal neurons, recruits KCNK2/TREK-1 channel at postsynaptic dense bodies microdomains and converts it to a leak channel no longer sensitive to stimulation by arachidonic acid, acidic pH or mechanical stress, nor inhibited by Gq-coupled receptors but still under the negative control of Gs-coupled receptors. Associates with ORAI1 pore-forming subunit of CRAC channels in Ca(2+) signaling microdomains where it recruits NFATC2/NFAT1 and couples store-operated Ca(2+) influx to calmodulin and calcineurin signaling and activation of NFAT-dependent transcriptional responses. In Rattus norvegicus (Rat), this protein is A-kinase anchor protein 5 (Akap5).